Reading from the N-terminus, the 139-residue chain is ATP synthase epsilon chain (139 aa).

It belongs to the ATPase epsilon chain family. As to quaternary structure, F-type ATPases have 2 components, CF(1) - the catalytic core - and CF(0) - the membrane proton channel. CF(1) has five subunits: alpha(3), beta(3), gamma(1), delta(1), epsilon(1). CF(0) has three main subunits: a, b and c.

It localises to the cell inner membrane. Functionally, produces ATP from ADP in the presence of a proton gradient across the membrane. The chain is ATP synthase epsilon chain from Acinetobacter baumannii (strain SDF).